The chain runs to 1985 residues: Non-reducing polyketide synthase ntnG (1985 aa).

The tract at residues 7–243 is N-terminal acylcarrier protein transacylase (SAT) domain; that stretch reads LLFGDQADAP…TILPAFGAVH (237 aa). One can recognise a Ketosynthase family 3 (KS3) domain in the interval 364–792; that stretch reads SGSVAIIGMS…GGNSCFVLEE (429 aa). Residues C536, H671, and H711 each act as for beta-ketoacyl synthase activity in the active site. Positions 889-1148 are malonyl-CoA:ACP transacylase (MAT) domain; that stretch reads VFAFTGQGAH…VNFEQAISHC (260 aa). The active-site For acyl/malonyl transferase activity is S980. An N-terminal hotdog fold region spans residues 1261–1392; it reads HRLVKQEDTA…VRLRDEHAFD (132 aa). Positions 1261-1567 constitute a PKS/mFAS DH domain; that stretch reads HRLVKQEDTA…FRKMPRTTLH (307 aa). A product template (PT) domain region spans residues 1265–1566; that stretch reads KQEDTAKEQH…RFRKMPRTTL (302 aa). H1293 functions as the Proton acceptor; for dehydratase activity in the catalytic mechanism. The tract at residues 1414–1567 is C-terminal hotdog fold; sequence AGGRANRFQG…FRKMPRTTLH (154 aa). The active-site Proton donor; for dehydratase activity is D1479. Polar residues predominate over residues 1578-1605; that stretch reads NTKQVPHPTTNGSAIANGVNRNPSHNEP. Residues 1578 to 1622 are disordered; the sequence is NTKQVPHPTTNGSAIANGVNRNPSHNEPSTPPVANGVNGTNGDQS. Positions 1622–1699 constitute a Carrier domain; the sequence is SDRKSLYSVL…DAQRELRRLE (78 aa). S1659 is subject to O-(pantetheine 4'-phosphoryl)serine. Residues 1719-1913 form a thioesterase (TE) domain region; sequence TRECNVVLMQ…DCTFVIWAKK (195 aa).

It participates in secondary metabolite biosynthesis; terpenoid biosynthesis. Functionally, non-reducing polyketide synthase; part of the gene cluster that mediates the biosynthesis of the meroterpenoids nectripenoids A and B, as well as cochliquninone D and isocochliquninone E. The pathway probably begins with the HR-PKS ntnH that catalyzes two chain-extension steps to form a reduced triketide, which then primes the SAT domain in the NR-PKS ntnG to initiate three more cycles of extension to give a linear hexaketide corresponding to the polyketide part of nectripenoids. The FAD-dependent monooxygenase ntnJ then performs an oxidative decarboxylation at C11 of the ntnH/ntnG product, via an electrophilic aromatic hydroxylation with concomitant ipso-decarboxylation. The membrane-bound polyprenyl transferase ntnF then introduces a farnesyl group before the FAD-dependent monooxygenase ntnK functions as the first epoxidase on terminal C12'-C13' olefin, followed by a second epoxidation on C7'-C8' catalyzed by ntnA. The terpene cyclase/mutase ntnI then initiates the sequential tricyclic ring formation through protonation of the terminal epoxide and catalyzes the regioselective and stereoselective 6/6/6-tricyclic ring formation. The cytochrome P450 monooxygenase ntnM may then hydroxylate C1'. In Nectria sp, this protein is Non-reducing polyketide synthase ntnG.